Consider the following 204-residue polypeptide: HTH-type transcriptional repressor KstR (204 aa).

Residues 18-78 (RERRKRILDA…SALGREFERI (61 aa)) enclose the HTH tetR-type domain. The segment at residues 41–60 (QMRAVAERADVAVGTLYRYF) is a DNA-binding region (H-T-H motif).

Homodimer.

Controls the expression of genes used for utilizing diverse lipids as energy sources. The polypeptide is HTH-type transcriptional repressor KstR (kstR) (Mycolicibacterium smegmatis (strain ATCC 700084 / mc(2)155) (Mycobacterium smegmatis)).